Reading from the N-terminus, the 553-residue chain is Dihydroxy-acid dehydratase (553 aa).

D78 contributes to the Mg(2+) binding site. C119 contributes to the [2Fe-2S] cluster binding site. Residues D120 and K121 each contribute to the Mg(2+) site. K121 carries the post-translational modification N6-carboxylysine. C191 contributes to the [2Fe-2S] cluster binding site. Residue E444 coordinates Mg(2+). The active-site Proton acceptor is the S470.

This sequence belongs to the IlvD/Edd family. In terms of assembly, homodimer. Requires [2Fe-2S] cluster as cofactor. The cofactor is Mg(2+).

It carries out the reaction (2R)-2,3-dihydroxy-3-methylbutanoate = 3-methyl-2-oxobutanoate + H2O. The enzyme catalyses (2R,3R)-2,3-dihydroxy-3-methylpentanoate = (S)-3-methyl-2-oxopentanoate + H2O. The protein operates within amino-acid biosynthesis; L-isoleucine biosynthesis; L-isoleucine from 2-oxobutanoate: step 3/4. It functions in the pathway amino-acid biosynthesis; L-valine biosynthesis; L-valine from pyruvate: step 3/4. Its function is as follows. Functions in the biosynthesis of branched-chain amino acids. Catalyzes the dehydration of (2R,3R)-2,3-dihydroxy-3-methylpentanoate (2,3-dihydroxy-3-methylvalerate) into 2-oxo-3-methylpentanoate (2-oxo-3-methylvalerate) and of (2R)-2,3-dihydroxy-3-methylbutanoate (2,3-dihydroxyisovalerate) into 2-oxo-3-methylbutanoate (2-oxoisovalerate), the penultimate precursor to L-isoleucine and L-valine, respectively. In Methanosarcina barkeri (strain Fusaro / DSM 804), this protein is Dihydroxy-acid dehydratase.